We begin with the raw amino-acid sequence, 80 residues long: Defensin-like protein 207 (80 aa).

An N-terminal signal peptide occupies residues methionine 1–alanine 29. Intrachain disulfides connect cysteine 38/cysteine 64, cysteine 50/cysteine 75, and cysteine 54/cysteine 77.

Belongs to the DEFL family.

The protein localises to the secreted. In Arabidopsis thaliana (Mouse-ear cress), this protein is Defensin-like protein 207.